The chain runs to 137 residues: Nucleoside diphosphate kinase (137 aa).

6 residues coordinate ATP: Lys9, Phe58, Arg86, Thr92, Arg103, and Asn113. His121 (pros-phosphohistidine intermediate) is an active-site residue.

It belongs to the NDK family. As to quaternary structure, homotetramer. Mg(2+) is required as a cofactor.

It is found in the cytoplasm. The enzyme catalyses a 2'-deoxyribonucleoside 5'-diphosphate + ATP = a 2'-deoxyribonucleoside 5'-triphosphate + ADP. It catalyses the reaction a ribonucleoside 5'-diphosphate + ATP = a ribonucleoside 5'-triphosphate + ADP. Major role in the synthesis of nucleoside triphosphates other than ATP. The ATP gamma phosphate is transferred to the NDP beta phosphate via a ping-pong mechanism, using a phosphorylated active-site intermediate. This is Nucleoside diphosphate kinase from Streptococcus pneumoniae (strain Hungary19A-6).